The chain runs to 159 residues: 2-C-methyl-D-erythritol 2,4-cyclodiphosphate synthase (159 aa).

Residues D10 and H12 each coordinate a divalent metal cation. Residues 10–12 (DVH) and 37–38 (HS) each bind 4-CDP-2-C-methyl-D-erythritol 2-phosphate. H45 is an a divalent metal cation binding site. 4-CDP-2-C-methyl-D-erythritol 2-phosphate contacts are provided by residues 59–61 (DIG), 64–68 (FPDTD), 103–109 (AQAPKML), 135–138 (TTTE), F142, and R145.

Belongs to the IspF family. As to quaternary structure, homotrimer. A divalent metal cation is required as a cofactor.

The enzyme catalyses 4-CDP-2-C-methyl-D-erythritol 2-phosphate = 2-C-methyl-D-erythritol 2,4-cyclic diphosphate + CMP. It participates in isoprenoid biosynthesis; isopentenyl diphosphate biosynthesis via DXP pathway; isopentenyl diphosphate from 1-deoxy-D-xylulose 5-phosphate: step 4/6. Its function is as follows. Involved in the biosynthesis of isopentenyl diphosphate (IPP) and dimethylallyl diphosphate (DMAPP), two major building blocks of isoprenoid compounds. Catalyzes the conversion of 4-diphosphocytidyl-2-C-methyl-D-erythritol 2-phosphate (CDP-ME2P) to 2-C-methyl-D-erythritol 2,4-cyclodiphosphate (ME-CPP) with a corresponding release of cytidine 5-monophosphate (CMP). This is 2-C-methyl-D-erythritol 2,4-cyclodiphosphate synthase from Francisella philomiragia subsp. philomiragia (strain ATCC 25017 / CCUG 19701 / FSC 153 / O#319-036).